Reading from the N-terminus, the 457-residue chain is Probable ubiquitin carboxyl-terminal hydrolase 16 (457 aa).

The tract at residues 34-97 is disordered; that stretch reads VSSPSVPEGT…DGANDFVDED (64 aa). Residues 45-67 show a composition bias toward polar residues; sequence TVLNNPKQSTVSRKSFSAPTSPT. Serine 61 bears the Phosphoserine mark. Threonine 64 carries the post-translational modification Phosphothreonine. A Phosphoserine modification is found at serine 65. In terms of domain architecture, USP spans 125–429; it reads PGLVNLGNTC…QAYILQYKRK (305 aa). The active-site Nucleophile is the cysteine 134. The Proton acceptor role is filled by histidine 388. The disordered stretch occupies residues 434–457; that stretch reads SKHKLNTENTVTKTSNKKRRKISF. Basic residues predominate over residues 448–457; sequence SNKKRRKISF.

It belongs to the peptidase C19 family.

The catalysed reaction is Thiol-dependent hydrolysis of ester, thioester, amide, peptide and isopeptide bonds formed by the C-terminal Gly of ubiquitin (a 76-residue protein attached to proteins as an intracellular targeting signal).. The chain is Probable ubiquitin carboxyl-terminal hydrolase 16 (ubp16) from Schizosaccharomyces pombe (strain 972 / ATCC 24843) (Fission yeast).